The primary structure comprises 678 residues: MAPFPDEVDLFTGPHWRMKQLVGRYCEKLSNTNFSNNNDLLALLQSLYETFKEFKMHEQIENEYIIGLLQQRSHTVYNVHSDNKLSEMLVLFEKGMKNVKNEYKQLNYVQQLKERLEAFTSDFLPHMKEEEEVFQPMLMEYFTYDEMKDIKKKVIAQHCSQKDTTELLRGLSLWNKAEELQKVLKYSVDEKAERNSKTQKSSSSISSLPPEVMLNIFTYLNPQDLCRCSQVNTEWAQLAKTGSLWRHLYPVLWARGDWYSGSHAYLDNEPDEDWISRRKDESRAYQEWDEDADIDESEETGEEEDSSISMAQREKELLNSLVHYILPYVGHSVKTLVLAYSSATSSKVIRQMLEYCPNLEHLDLTQTDISDSAFNGWHFGACQTLHHIDLSGCDKITDLTLEKLSVALGIPSAHKKRLLKCYRNNRTLKDIRNQMRCSSLAQITGESTIYSDAFWANSDRSQDYTSPPIWILDSGNPGDIEDAADWKFRTTDGLCVLEMAPSVTCFSNGCCSRARPGRWTNVGWQEHCKAATVSYCGHTLCGNTLRTIHTLPEASALCNIGTRTLHSDITDCFPGSAKSDQQAARALQFLSLSGCHQITDHGLRALTIGGGLPKLEHLNLSGCLNVTGSGLQDLVATCPSLNDEHFYYCDNISGPHGATASGCQNLQCGFRMCCRSGE.

The hemerythrin-like stretch occupies residues 1–159 (MAPFPDEVDL…IKKKVIAQHC (159 aa)). The Fe(3+) site is built by H15, H57, E58, E61, H80, H126, and E130. Residues 202 to 248 (SSSISSLPPEVMLNIFTYLNPQDLCRCSQVNTEWAQLAKTGSLWRHL) enclose the F-box domain. The interval 285–308 (YQEWDEDADIDESEETGEEEDSSI) is disordered. The span at 287–306 (EWDEDADIDESEETGEEEDS) shows a compositional bias: acidic residues. LRR repeat units lie at residues 314 to 340 (EKELLNSLVHYILPYVGHSVKTLVLAY), 341 to 366 (SSATSSKVIRQMLEYCPNLEHLDLTQ), 367 to 392 (TDISDSAFNGWHFGACQTLHHIDLSG), 393 to 420 (CDKITDLTLEKLSVALGIPSAHKKRLLK), 566 to 594 (HSDITDCFPGSAKSDQQAARALQFLSLSG), 595 to 622 (CHQITDHGLRALTIGGGLPKLEHLNLSG), and 623 to 648 (CLNVTGSGLQDLVATCPSLNDEHFYY). The [2Fe-2S] cluster site is built by C649, C663, C673, and C674. The LRR 8 repeat unit spans residues 655 to 678 (PHGATASGCQNLQCGFRMCCRSGE).

In terms of assembly, part of a SCF (SKP1-cullin-F-box) protein ligase complex. [2Fe-2S] cluster is required as a cofactor. Ubiquitinated upon iron and oxygen depletion, leading to its degradation by the proteasome. Ubiquitination is regulated by the hemerythrin-like region that acts as an oxygen and iron sensor.

It localises to the cytoplasm. Its subcellular location is the perinuclear region. It is found in the nucleus. The protein operates within protein modification; protein ubiquitination. Component of some SCF (SKP1-cullin-F-box) protein ligase complex that plays a central role in iron homeostasis by promoting the ubiquitination and subsequent degradation of ireb2/irp2. Upon high iron and oxygen level, it specifically recognizes and binds ireb2/irp2, promoting its ubiquitination and degradation by the proteasome. The chain is F-box/LRR-repeat protein 5 (fbxl5) from Xenopus laevis (African clawed frog).